The sequence spans 165 residues: WSXSGDDDDDDGDSGDDDDDDGDDDSDDDNDADDDSGAEDDNDDDSGDENEDDTDDSGDDVKMIKPTTVMTGWMMTIADESSDDDNERDDTSDDSVGDDAYNDDSQAGELNSDSTYYDQLRSQGDVQSQQGFKNLQSYSNGFKVSSGLVATVVSTLACLFLTNLH.

2 stretches are compositionally biased toward acidic residues: residues 1-58 (WSXS…DDSG) and 80-102 (ESSD…DAYN). The interval 1-112 (WSXSGDDDDD…DDSQAGELNS (112 aa)) is disordered. A compositionally biased stretch (polar residues) spans 103-112 (DDSQAGELNS).

In terms of tissue distribution, component of the acid-insoluble and acid-soluble organic matrix of the aragonitic skeleton (at protein level).

The protein localises to the secreted. The sequence is that of Secreted acidic protein 2 from Acropora millepora (Staghorn coral).